The primary structure comprises 191 residues: D-glycero-beta-D-manno-heptose-1,7-bisphosphate 7-phosphatase (191 aa).

The active-site Nucleophile is the Asp11. Mg(2+) contacts are provided by Asp11 and Asp13. Substrate contacts are provided by residues Asp11 to Asp13, Asp19 to Tyr22, and Thr53 to Ser56. The active-site Proton donor is the Asp13. Zn(2+) contacts are provided by Cys92, His94, Cys107, and Cys109. Substrate is bound at residue Arg110 to Lys111. Residues Asp136 and Lys137 each coordinate Mg(2+). Substrate is bound at residue Lys137.

It belongs to the GmhB family. Monomer. Mg(2+) serves as cofactor. Zn(2+) is required as a cofactor.

It is found in the cytoplasm. The catalysed reaction is D-glycero-beta-D-manno-heptose 1,7-bisphosphate + H2O = D-glycero-beta-D-manno-heptose 1-phosphate + phosphate. Its pathway is nucleotide-sugar biosynthesis; ADP-L-glycero-beta-D-manno-heptose biosynthesis; ADP-L-glycero-beta-D-manno-heptose from D-glycero-beta-D-manno-heptose 7-phosphate: step 2/4. It functions in the pathway bacterial outer membrane biogenesis; LPS core biosynthesis. In terms of biological role, converts the D-glycero-beta-D-manno-heptose 1,7-bisphosphate intermediate into D-glycero-beta-D-manno-heptose 1-phosphate by removing the phosphate group at the C-7 position. This Escherichia coli O157:H7 protein is D-glycero-beta-D-manno-heptose-1,7-bisphosphate 7-phosphatase (gmhB).